Reading from the N-terminus, the 634-residue chain is Probable potassium transport system protein Kup (634 aa).

A run of 12 helical transmembrane segments spans residues 21 to 41 (IILSAIGVVFGDIGTSPLYTL), 58 to 78 (VLGILSLIFWAMMLVVTIKYV), 110 to 130 (IYIVGILGIFGTSLFFGDGII), 148 to 168 (PHMKAFVVPITLAVLILLFLC), 180 to 200 (FGPITFLWFIAIGVVGVYNII), 217 to 237 (FFLEHGWHSMFVLGAVVLAVT), 258 to 278 (WMYVVLPMLALNYLGQGALVL), 296 to 316 (GLYPMIALATAAAVIASQALI), 348 to 368 (IYVPTVNWTLLMLVILTVIGF), 377 to 397 (AYGVAVTGTMMITTVLMIIYA), 408 to 428 (LLMIAIVFIAVDGAFFYANII), and 432 to 452 (DGAWFPLLLGVVIFTFMRTWL).

The protein belongs to the HAK/KUP transporter (TC 2.A.72) family.

The protein resides in the cell inner membrane. It carries out the reaction K(+)(in) + H(+)(in) = K(+)(out) + H(+)(out). Transport of potassium into the cell. Likely operates as a K(+):H(+) symporter. In Xylella fastidiosa (strain Temecula1 / ATCC 700964), this protein is Probable potassium transport system protein Kup.